A 236-amino-acid chain; its full sequence is Ribonuclease HII (236 aa).

The region spanning 21–214 is the RNase H type-2 domain; that stretch reads RTVAGVDEVG…LDALPRWQHL (194 aa). Positions 27, 28, and 119 each coordinate a divalent metal cation.

Belongs to the RNase HII family. Requires Mn(2+) as cofactor. It depends on Mg(2+) as a cofactor.

Its subcellular location is the cytoplasm. It carries out the reaction Endonucleolytic cleavage to 5'-phosphomonoester.. Endonuclease that specifically degrades the RNA of RNA-DNA hybrids. The sequence is that of Ribonuclease HII from Streptomyces griseus subsp. griseus (strain JCM 4626 / CBS 651.72 / NBRC 13350 / KCC S-0626 / ISP 5235).